The following is a 351-amino-acid chain: Neutral protease 2 homolog MGG_10927 (351 aa).

The first 16 residues, 1–16 (MKFSIGVSLLATLAGA), serve as a signal peptide directing secretion. Residues 17–177 (VNVDMAKRDT…AAFLAKRTIV (161 aa)) constitute a propeptide that is removed on maturation. 2 disulfide bridges follow: cysteine 181–cysteine 253 and cysteine 260–cysteine 278. Histidine 303 is a Zn(2+) binding site. The active site involves glutamate 304. Histidine 307 is a binding site for Zn(2+).

The protein belongs to the peptidase M35 family. Requires Zn(2+) as cofactor.

The protein localises to the secreted. The catalysed reaction is Preferential cleavage of bonds with hydrophobic residues in P1'. Also 3-Asn-|-Gln-4 and 8-Gly-|-Ser-9 bonds in insulin B chain.. Secreted metalloproteinase that allows assimilation of proteinaceous substrates. Shows high activities on basic nuclear substrates such as histone and protamine. The protein is Neutral protease 2 homolog MGG_10927 of Colletotrichum graminicola (strain M1.001 / M2 / FGSC 10212) (Maize anthracnose fungus).